The following is a 1270-amino-acid chain: Activating transcription factor 7-interacting protein 1 (1270 aa).

Residue Met1 is modified to N-acetylmethionine. Lys33 participates in a covalent cross-link: Glycyl lysine isopeptide (Lys-Gly) (interchain with G-Cter in SUMO2). A phosphoserine mark is found at Ser57 and Ser113. Disordered regions lie at residues 104 to 223 and 235 to 402; these read DDDL…ISGD and TSVD…EDET. Thr118 carries the phosphothreonine modification. Low complexity-rich tracts occupy residues 132-203 and 248-269; these read GDPA…SSGD and DPAS…SDDL. Composition is skewed to basic and acidic residues over residues 310 to 327 and 333 to 343; these read SNKD…EKLE and DSLDEKNKADN. Acidic residues predominate over residues 347–356; it reads ANEETLETDD. A compositionally biased stretch (basic and acidic residues) spans 363–373; it reads RPPENEKKVEE. A phosphoserine mark is found at Ser445, Ser473, Ser474, Ser477, Ser479, and Ser496. Disordered stretches follow at residues 455-570, 658-685, 822-862, and 886-906; these read TSLL…SKRR, EDLK…NSNN, PPTV…PTAS, and RTSL…NRGP. Residues 474-486 show a composition bias toward polar residues; sequence SFGSPSKQESSES. Positions 496 to 509 are enriched in acidic residues; the sequence is SDEEDISGEKDESE. A compositionally biased stretch (basic and acidic residues) spans 524 to 552; sequence SNEKDNKPEEEEQVIHEDDERPSEKNEFS. A Nuclear localization signal motif is present at residues 553–571; it reads RRKRSKSEDMDNVQSKRRR. Residue Lys558 forms a Glycyl lysine isopeptide (Lys-Gly) (interchain with G-Cter in SUMO2) linkage. Ser559 is modified (phosphoserine). An interaction with SETDB1 region spans residues 562 to 817; the sequence is MDNVQSKRRR…NQPSGNVEFI (256 aa). Residues 617-665 adopt a coiled-coil conformation; that stretch reads KTLAELKTRVEKIECNKRHKTVLTELQAKIARLTKRFEAAKEDLKKRHE. Ser673 bears the Phosphoserine mark. Residues 822 to 834 show a composition bias toward polar residues; it reads PPTVSGLTKNPVS. Residues 843–854 show a composition bias toward low complexity; sequence KPNNVPSVPSPS. A Phosphoserine modification is found at Ser899. Glycyl lysine isopeptide (Lys-Gly) (interchain with G-Cter in SUMO2) cross-links involve residues Lys910 and Lys938. Composition is skewed to polar residues over residues 918–942 and 950–964; these read TSSA…TIDA and DSTS…SDSS. Disordered regions lie at residues 918–1026 and 1115–1160; these read TSSA…SQTT and STGP…STSL. The interval 965–975 is interaction with SUMO; the sequence is GVIDLTMDDEE. Polar residues-rich tracts occupy residues 988 to 999 and 1016 to 1026; these read TPVSTMSSSQPV and GVPTSGPSQTT. Residues 1134–1151 are compositionally biased toward pro residues; the sequence is PRPVHPAPLPEAPQPQRL. The interaction with MBD1 stretch occupies residues 1154 to 1270; it reads EAASTSLPQK…TDVISSTQSS (117 aa). In terms of domain architecture, Fibronectin type-III spans 1160 to 1270; it reads LPQKPHLKLA…TDVISSTQSS (111 aa).

This sequence belongs to the MCAF family. As to quaternary structure, interacts with MBD1; the interaction is enhanced when MBD1 is sumoylated. Interacts with SETDB1; the interaction protects SETDB1 from proteasomal degradation and is required to stimulate histone methyltransferase activity and facilitate the conversion of dimethylated to trimethylated H3 'Lys-9'. Interacts with SUMO ubiquitin-like proteins (SUMO1, SUNO2 and SUMO3), with a preference for SUMO2 and SUMO3. Interacts with SP1, ATF7 and ZHX1. Interacts with the general transcription machinery, including ERCC2, ERCC3, GTF2E1, GTF2E2 and POLR2A. (Microbial infection) Interacts with Epstein-Barr virus BRLF1/Rta protein, leading to the regulation of host genes in Epstein-Barr virus-infected cells. In terms of tissue distribution, detected at low levels in breast, lung and stomach; highly up-regulated in the corresponding cancerous tissues (at protein level).

Its subcellular location is the nucleus. Functionally, recruiter that couples transcriptional factors to general transcription apparatus and thereby modulates transcription regulation and chromatin formation. Can both act as an activator or a repressor depending on the context. Required for HUSH-mediated heterochromatin formation and gene silencing. Mediates MBD1-dependent transcriptional repression, probably by recruiting complexes containing SETDB1. Stabilizes SETDB1, is required to stimulate histone methyltransferase activity of SETDB1 and facilitates the conversion of dimethylated to trimethylated H3 'Lys-9' (H3K9me3). The complex formed with MBD1 and SETDB1 represses transcription and couples DNA methylation and histone H3 'Lys-9' trimethylation (H3K9me3). Facilitates telomerase TERT and TERC gene expression by SP1 in cancer cells. This chain is Activating transcription factor 7-interacting protein 1, found in Homo sapiens (Human).